The sequence spans 302 residues: Bifunctional protein FolD (302 aa).

NADP(+) contacts are provided by residues 165 to 167 (GRS), serine 190, and isoleucine 231.

This sequence belongs to the tetrahydrofolate dehydrogenase/cyclohydrolase family. Homodimer.

The enzyme catalyses (6R)-5,10-methylene-5,6,7,8-tetrahydrofolate + NADP(+) = (6R)-5,10-methenyltetrahydrofolate + NADPH. The catalysed reaction is (6R)-5,10-methenyltetrahydrofolate + H2O = (6R)-10-formyltetrahydrofolate + H(+). It functions in the pathway one-carbon metabolism; tetrahydrofolate interconversion. Functionally, catalyzes the oxidation of 5,10-methylenetetrahydrofolate to 5,10-methenyltetrahydrofolate and then the hydrolysis of 5,10-methenyltetrahydrofolate to 10-formyltetrahydrofolate. In Prochlorococcus marinus (strain MIT 9313), this protein is Bifunctional protein FolD.